A 308-amino-acid chain; its full sequence is Protein translocase subunit SecF (308 aa).

Transmembrane regions (helical) follow at residues 12–32 (YFIFSTFMILFSLFSIFTKGF), 127–147 (AKNALWALALGSILILIYITI), 152–172 (IYALSSVLALLHDVLVTIGFI), 182–202 (PFIAAILTILGYSMNDTIVIF), 234–254 (VYTSLTTLLALAALLIFGGST), and 262–282 (LLVGIVYGTYSSIWLASPLVY).

The protein belongs to the SecD/SecF family. SecF subfamily. Forms a complex with SecD. Part of the essential Sec protein translocation apparatus which comprises SecA, SecYEG and auxiliary proteins SecDF. Other proteins may also be involved.

Its subcellular location is the cell inner membrane. Its function is as follows. Part of the Sec protein translocase complex. Interacts with the SecYEG preprotein conducting channel. SecDF uses the proton motive force (PMF) to complete protein translocation after the ATP-dependent function of SecA. This is Protein translocase subunit SecF from Sebaldella termitidis (strain ATCC 33386 / NCTC 11300).